The following is a 288-amino-acid chain: Elongation factor Ts (288 aa).

The segment at 80–83 is involved in Mg(2+) ion dislocation from EF-Tu; that stretch reads TDFV.

It belongs to the EF-Ts family.

Its subcellular location is the cytoplasm. In terms of biological role, associates with the EF-Tu.GDP complex and induces the exchange of GDP to GTP. It remains bound to the aminoacyl-tRNA.EF-Tu.GTP complex up to the GTP hydrolysis stage on the ribosome. The protein is Elongation factor Ts of Chromobacterium violaceum (strain ATCC 12472 / DSM 30191 / JCM 1249 / CCUG 213 / NBRC 12614 / NCIMB 9131 / NCTC 9757 / MK).